A 502-amino-acid polypeptide reads, in one-letter code: MEIDESKRASSDSLTIYVGELSPKTLDSDLFRVFSNVGKVLSVKLIKRAEPVSSFAFVTFENEEDAERAIREYKHYELHNRQIRVMKKDERPPETGNIFVKNLPEDFTGKDLDDAFSMFGEIVSCKVATTSHGKSKGYGFVQFKEKKAAKKVIKNFSSLDGLLLGGNRIVVELYNPEIKKGESKKTSATFTNCFIKNFPFDASEAELLELLERYGKVTSLFFPVKDNGKPKGFAFANFENHESALNAIKNLHGTFPFGAGRDGTGEAFYIQKGQRKEERAEELRKMFEQMSMQGQSYKKNLYITNIPEGFGCEELGSIFKEFGNITSISVGVDGANSQKQYAYICYSTPEEASIAVERGNEIYLDGNRLQVAYFKNKLERMKEKEFGGGLGYKPGVPYMYNQGVSFASRGFKRERNRGGAAKPYGNELEKLHSLVLAAAPSFKSQWKDFGVGNEVEFANKVIRAFRSRSEEEIKDMIDLNFVLTKNIASAIEDDNSNDQVLL.

RRM domains are found at residues L14–E90, G96–P176, T191–R275, and K299–N376.

It belongs to the polyadenylate-binding protein type-1 family.

The protein resides in the cytoplasm. It localises to the nucleus. In terms of biological role, binds the poly(A) tail of mRNA. Appears to be an important mediator of the multiple roles of the poly(A) tail in mRNA biogenesis, stability and translation. The chain is Polyadenylate-binding protein, cytoplasmic and nuclear (PAB1) from Encephalitozoon cuniculi (strain GB-M1) (Microsporidian parasite).